The chain runs to 255 residues: DNA repair protein RecO (255 aa).

The protein belongs to the RecO family.

Involved in DNA repair and RecF pathway recombination. The polypeptide is DNA repair protein RecO (Listeria monocytogenes serotype 4a (strain HCC23)).